Here is a 423-residue protein sequence, read N- to C-terminus: UDP-N-acetylglucosamine 1-carboxyvinyltransferase (423 aa).

22-23 (KN) serves as a coordination point for phosphoenolpyruvate. Residue Arg93 participates in UDP-N-acetyl-alpha-D-glucosamine binding. The Proton donor role is filled by Cys117. 2-(S-cysteinyl)pyruvic acid O-phosphothioketal is present on Cys117. UDP-N-acetyl-alpha-D-glucosamine contacts are provided by residues 122 to 126 (RPVDL), Asp308, and Ile330.

The protein belongs to the EPSP synthase family. MurA subfamily.

It is found in the cytoplasm. The enzyme catalyses phosphoenolpyruvate + UDP-N-acetyl-alpha-D-glucosamine = UDP-N-acetyl-3-O-(1-carboxyvinyl)-alpha-D-glucosamine + phosphate. Its pathway is cell wall biogenesis; peptidoglycan biosynthesis. In terms of biological role, cell wall formation. Adds enolpyruvyl to UDP-N-acetylglucosamine. The sequence is that of UDP-N-acetylglucosamine 1-carboxyvinyltransferase from Maricaulis maris (strain MCS10) (Caulobacter maris).